We begin with the raw amino-acid sequence, 115 residues long: Large ribosomal subunit protein bL19 (115 aa).

Belongs to the bacterial ribosomal protein bL19 family.

Its function is as follows. This protein is located at the 30S-50S ribosomal subunit interface and may play a role in the structure and function of the aminoacyl-tRNA binding site. In Bacillus velezensis (strain DSM 23117 / BGSC 10A6 / LMG 26770 / FZB42) (Bacillus amyloliquefaciens subsp. plantarum), this protein is Large ribosomal subunit protein bL19.